A 414-amino-acid chain; its full sequence is 2,3-diketo-5-methylthiopentyl-1-phosphate enolase (414 aa).

The active-site Proton acceptor is the Lys99. Substrate-binding positions include Lys148, 174–177, His265, Gly338, and 360–361; these read KDDE and GG. Mg(2+) is bound by residues Lys174, Asp176, and Glu177. The residue at position 174 (Lys174) is an N6-carboxylysine.

It belongs to the RuBisCO large chain family. Type IV subfamily. In terms of assembly, homodimer. The cofactor is Mg(2+).

It carries out the reaction 5-methylsulfanyl-2,3-dioxopentyl phosphate = 2-hydroxy-5-methylsulfanyl-3-oxopent-1-enyl phosphate. Its pathway is amino-acid biosynthesis; L-methionine biosynthesis via salvage pathway; L-methionine from S-methyl-5-thio-alpha-D-ribose 1-phosphate: step 3/6. In terms of biological role, catalyzes the enolization of 2,3-diketo-5-methylthiopentyl-1-phosphate (DK-MTP-1-P) into 2-hydroxy-3-keto-5-methylthiopentenyl-1-phosphate (HK-MTPenyl-1-P). This Bacillus cereus (strain AH187) protein is 2,3-diketo-5-methylthiopentyl-1-phosphate enolase.